We begin with the raw amino-acid sequence, 545 residues long: Esterase-5B (545 aa).

The first 19 residues, 1 to 19 (MYCAKLILLLGCFWISSSA), serve as a signal peptide directing secretion. Cys84 and Cys103 are disulfide-bonded. The N-linked (GlcNAc...) asparagine glycan is linked to Asn113. Ser207 functions as the Acyl-ester intermediate in the catalytic mechanism. An intrachain disulfide couples Cys259 to Cys271. N-linked (GlcNAc...) asparagine glycosylation is present at Asn421. Catalysis depends on His467, which acts as the Charge relay system. A glycan (N-linked (GlcNAc...) asparagine) is linked at Asn507. A disulfide bond links Cys515 and Cys536.

This sequence belongs to the type-B carboxylesterase/lipase family. In terms of assembly, homodimer.

It is found in the secreted. It catalyses the reaction a carboxylic ester + H2O = an alcohol + a carboxylate + H(+). The chain is Esterase-5B (Est-5B) from Drosophila persimilis (Fruit fly).